Here is a 647-residue protein sequence, read N- to C-terminus: MQVTIEDQSLEAAAGEACGQVLSRAVSGKRLKNAVACLVDGQPRDLAFPLPEDAHELALVAADSPMGLSIIRHSAAHIMAEAVKTLFPSVQVTIGPAIENGFYYDFAYERPFTPDDLEAIEAEMQKSIAANQPFSCTYVPKADAKALFAAQGESYKLEIMDENIVGDTVSLYRHGTFTDLCRGPHVPTTGLVRAVKLLSVAGAYWRGDEKRPMLQRIYGTAFASAADLKTYLHHIEEAKKRDHRKLGAQLDLFSFSEEVGAGMCIWHPKGELIRTIIEDFERREHLRRGYDLVRGPLILRRELWERSGHYDNYRENMYFTEIDEQSYGIKPMNCLSHMLIYKSRVRSYRDLPQRYFELGVVHRHEKSGVLHGLLRVRQFTQDDAHILCRPDQLQEEITGVVRFVQDVVGLFGFDFEAELSTRPEKSIGSDEDWDRATKALVDAMESIGLPYEVNEGDGAFYGPKIDIKLKDALDRRWQCATIQCDFTLPERFDLVYTDADGERKRPVMLHRVILGAVERFLGVLIEHTAGALPTWLSPVQARILIVTDAQKEFAEQALARLKEAGIRVELDDRNEKLGFKVREAQVEKIPYMLVAGDKEKELGGLNVRLRSGENLGVKTLDEVALMITADCQEPFKRGGMRYNFCSQ.

In terms of domain architecture, TGS spans 1–60 (MQVTIEDQSLEAAAGEACGQVLSRAVSGKRLKNAVACLVDGQPRDLAFPLPEDAHELALV). Positions 242–533 (DHRKLGAQLD…LIEHTAGALP (292 aa)) are catalytic. Cys-334, His-385, and His-510 together coordinate Zn(2+).

This sequence belongs to the class-II aminoacyl-tRNA synthetase family. Homodimer. It depends on Zn(2+) as a cofactor.

Its subcellular location is the cytoplasm. The catalysed reaction is tRNA(Thr) + L-threonine + ATP = L-threonyl-tRNA(Thr) + AMP + diphosphate + H(+). In terms of biological role, catalyzes the attachment of threonine to tRNA(Thr) in a two-step reaction: L-threonine is first activated by ATP to form Thr-AMP and then transferred to the acceptor end of tRNA(Thr). Also edits incorrectly charged L-seryl-tRNA(Thr). This Solidesulfovibrio magneticus (strain ATCC 700980 / DSM 13731 / RS-1) (Desulfovibrio magneticus) protein is Threonine--tRNA ligase.